The chain runs to 309 residues: tRNA pseudouridine synthase B (309 aa).

Asp-52 functions as the Nucleophile in the catalytic mechanism.

This sequence belongs to the pseudouridine synthase TruB family. Type 1 subfamily.

The enzyme catalyses uridine(55) in tRNA = pseudouridine(55) in tRNA. In terms of biological role, responsible for synthesis of pseudouridine from uracil-55 in the psi GC loop of transfer RNAs. In Leptospira interrogans serogroup Icterohaemorrhagiae serovar copenhageni (strain Fiocruz L1-130), this protein is tRNA pseudouridine synthase B.